Here is a 314-residue protein sequence, read N- to C-terminus: tRNA(Ile)-lysidine synthase (314 aa).

Ser-37–Ser-42 contributes to the ATP binding site.

This sequence belongs to the tRNA(Ile)-lysidine synthase family.

The protein localises to the cytoplasm. It catalyses the reaction cytidine(34) in tRNA(Ile2) + L-lysine + ATP = lysidine(34) in tRNA(Ile2) + AMP + diphosphate + H(+). Its function is as follows. Ligates lysine onto the cytidine present at position 34 of the AUA codon-specific tRNA(Ile) that contains the anticodon CAU, in an ATP-dependent manner. Cytidine is converted to lysidine, thus changing the amino acid specificity of the tRNA from methionine to isoleucine. This is tRNA(Ile)-lysidine synthase from Corynebacterium glutamicum (strain ATCC 13032 / DSM 20300 / JCM 1318 / BCRC 11384 / CCUG 27702 / LMG 3730 / NBRC 12168 / NCIMB 10025 / NRRL B-2784 / 534).